The sequence spans 196 residues: Phosphoheptose isomerase (196 aa).

Residues 34–193 (LIETFKIGNK…EQGLFGIFAG (160 aa)) form the SIS domain. 49 to 51 (NGG) contacts substrate. Residues histidine 58 and glutamate 62 each coordinate Zn(2+). Substrate is bound by residues glutamate 62, 91 to 92 (ND), 117 to 119 (STS), serine 122, and glutamine 169. Residues glutamine 169 and histidine 177 each coordinate Zn(2+).

Belongs to the SIS family. GmhA subfamily. As to quaternary structure, homotetramer. Zn(2+) serves as cofactor.

Its subcellular location is the cytoplasm. The enzyme catalyses 2 D-sedoheptulose 7-phosphate = D-glycero-alpha-D-manno-heptose 7-phosphate + D-glycero-beta-D-manno-heptose 7-phosphate. The protein operates within carbohydrate biosynthesis; D-glycero-D-manno-heptose 7-phosphate biosynthesis; D-glycero-alpha-D-manno-heptose 7-phosphate and D-glycero-beta-D-manno-heptose 7-phosphate from sedoheptulose 7-phosphate: step 1/1. Catalyzes the isomerization of sedoheptulose 7-phosphate in D-glycero-D-manno-heptose 7-phosphate. This Trichlorobacter lovleyi (strain ATCC BAA-1151 / DSM 17278 / SZ) (Geobacter lovleyi) protein is Phosphoheptose isomerase.